We begin with the raw amino-acid sequence, 449 residues long: Tubulin alpha chain (449 aa).

Residues Gln-11, Glu-71, Ser-140, Gly-144, Thr-145, Thr-179, Asn-206, and Asn-228 each contribute to the GTP site. Glu-71 is a Mg(2+) binding site. Glu-254 is an active-site residue.

This sequence belongs to the tubulin family. In terms of assembly, dimer of alpha and beta chains. A typical microtubule is a hollow water-filled tube with an outer diameter of 25 nm and an inner diameter of 15 nM. Alpha-beta heterodimers associate head-to-tail to form protofilaments running lengthwise along the microtubule wall with the beta-tubulin subunit facing the microtubule plus end conferring a structural polarity. Microtubules usually have 13 protofilaments but different protofilament numbers can be found in some organisms and specialized cells. It depends on Mg(2+) as a cofactor.

Its subcellular location is the cytoplasm. The protein localises to the cytoskeleton. It carries out the reaction GTP + H2O = GDP + phosphate + H(+). Functionally, tubulin is the major constituent of microtubules, a cylinder consisting of laterally associated linear protofilaments composed of alpha- and beta-tubulin heterodimers. Microtubules grow by the addition of GTP-tubulin dimers to the microtubule end, where a stabilizing cap forms. Below the cap, tubulin dimers are in GDP-bound state, owing to GTPase activity of alpha-tubulin. This Gibberella zeae (strain ATCC MYA-4620 / CBS 123657 / FGSC 9075 / NRRL 31084 / PH-1) (Wheat head blight fungus) protein is Tubulin alpha chain (TUB1).